A 260-amino-acid chain; its full sequence is Factor V activator RVV-V gamma (260 aa).

The N-terminal stretch at 1–18 is a signal peptide; that stretch reads MVLIKVLANLLVLQLSYA. Positions 19-24 are excised as a propeptide; it reads QKSSEL. Positions 25–251 constitute a Peptidase S1 domain; sequence VVGGDECNIN…YNNWIQSIIA (227 aa). Intrachain disulfides connect C31-C165, C52-C68, C100-C258, C144-C212, C176-C191, and C202-C227. Residues H67 and D112 each act as charge relay system in the active site. S206 (charge relay system) is an active-site residue. A glycan (N-linked (GlcNAc...) asparagine) is linked at N253.

It belongs to the peptidase S1 family. Snake venom subfamily. As to quaternary structure, monomer. As to expression, expressed by the venom gland.

Its subcellular location is the secreted. It carries out the reaction Fully activates human clotting factor V by a single cleavage at the 1545-Trp-Tyr-Leu-Arg-|-Ser-Asn-Asn-Gly-1552 bond. Cattle, but not rabbit, factor V is cleaved, and no other proteins of the clotting system are attacked. Esterase activity is observed on Bz-Arg-OEt and Tos-Arg-OMe, and amidase activity on Phe-pipecolyl-Arg-NHPhNO2.. In terms of biological role, venom serine protease that selectively activates factor V (F5) in a calcium-independent manner. It cleaves the Arg(1545)-Ser(1546) linkage in the human factor V molecule. Induces the coagulation of mammalian plasma. The chain is Factor V activator RVV-V gamma from Daboia siamensis (Eastern Russel's viper).